Consider the following 124-residue polypeptide: Small polypeptide ROTUNDIFOLIA LIKE 3 (124 aa).

The segment at Met-1–Ser-25 is disordered. N-linked (GlcNAc...) asparagine glycosylation is found at Asn-35 and Asn-38. A helical membrane pass occupies residues Ala-59–Ser-75. The interval Trp-60–Lys-95 is disordered. Residues Ser-71–Gln-91 are compositionally biased toward low complexity. A glycan (N-linked (GlcNAc...) asparagine) is linked at Asn-88. A required for DVL/RTFL small polypeptide activity region spans residues Arg-92–Tyr-124.

This sequence belongs to the DVL/RTFL small polypeptides family.

It is found in the cell membrane. Its function is as follows. Small polypeptide acting as a regulatory molecule which coordinates cellular responses required for differentiation, growth and development, probably by restricting polar cell proliferation in lateral organs (e.g. leaves and petioles). The chain is Small polypeptide ROTUNDIFOLIA LIKE 3 from Oryza sativa subsp. indica (Rice).